A 771-amino-acid chain; its full sequence is 5-methyltetrahydropteroyltriglutamate--homocysteine methyltransferase (771 aa).

5-methyltetrahydropteroyltri-L-glutamate contacts are provided by residues 16-19 (RELK) and K117. L-homocysteine is bound by residues 443 to 445 (IGS) and E496. L-methionine contacts are provided by residues 443–445 (IGS) and E496. 5-methyltetrahydropteroyltri-L-glutamate is bound by residues 527-528 (RC) and W573. D611 contacts L-homocysteine. Residue D611 coordinates L-methionine. E617 serves as a coordination point for 5-methyltetrahydropteroyltri-L-glutamate. 3 residues coordinate Zn(2+): H653, C655, and E677. The active-site Proton donor is the H706. Zn(2+) is bound at residue C738.

The protein belongs to the vitamin-B12 independent methionine synthase family. Zn(2+) is required as a cofactor.

The enzyme catalyses 5-methyltetrahydropteroyltri-L-glutamate + L-homocysteine = tetrahydropteroyltri-L-glutamate + L-methionine. It participates in amino-acid biosynthesis; L-methionine biosynthesis via de novo pathway; L-methionine from L-homocysteine (MetE route): step 1/1. Functionally, catalyzes the transfer of a methyl group from 5-methyltetrahydrofolate to homocysteine resulting in methionine formation. The sequence is that of 5-methyltetrahydropteroyltriglutamate--homocysteine methyltransferase from Stutzerimonas stutzeri (strain A1501) (Pseudomonas stutzeri).